The sequence spans 480 residues: Serralysin (480 aa).

Zn(2+) is bound at residue histidine 181. The active site involves glutamate 182. Histidine 185 and histidine 191 together coordinate Zn(2+). Residues arginine 260, aspartate 263, aspartate 292, glycine 294, glycine 295, aspartate 297, threonine 334, and glutamate 336 each coordinate Ca(2+). Hemolysin-type calcium-binding repeat units follow at residues 339-356 (IGGSGNDVLIGNDAANTL) and 357-374 (KGGAGDDIIYGGLGADNL).

It belongs to the peptidase M10B family. The cofactor is Zn(2+). Ca(2+) serves as cofactor.

The protein resides in the secreted. The enzyme catalyses Preferential cleavage of bonds with hydrophobic residues in P1'.. In Photorhabdus laumondii subsp. laumondii (strain DSM 15139 / CIP 105565 / TT01) (Photorhabdus luminescens subsp. laumondii), this protein is Serralysin (prtA).